Here is a 313-residue protein sequence, read N- to C-terminus: Interferon-inducible double-stranded RNA-dependent protein kinase activator A (313 aa).

The tract at residues 1-21 (MSQSRHRAAAPPMEREDSGTF) is disordered. Sufficient for self-association and interaction with TARBP2 regions lie at residues 1 to 103 (MSQS…KANA), 102 to 195 (NASI…FSNI), and 195 to 313 (ISPE…AERK). At serine 18 the chain carries Phosphoserine. DRBM domains follow at residues 34 to 101 (TPIQ…ILKA), 126 to 194 (NPIG…KFSN), and 240 to 308 (DYIQ…YLKI). Phosphoserine occurs at positions 167, 246, and 287.

It belongs to the PRKRA family. In terms of assembly, homodimer. Interacts with EIF2AK2/PKR through its DRBM domains. Interacts with DICER1, AGO2 and TARBP2. Also able to interact with dsRNA. Interacts with UBC9. Forms a complex with UBC9 and p53/TP53. Interacts with DUS2L (via DRBM domain). In terms of processing, phosphorylated at Ser-246 in unstressed cells and at Ser-287 in stressed cells. Phosphorylation at Ser-246 appears to be a prerequisite for subsequent phosphorylation at Ser-287. Phosphorylation at Ser-246 and Ser-287 are necessary for activation of EIF2AK2/PKR under conditions of stress.

It is found in the cytoplasm. The protein resides in the perinuclear region. Activates EIF2AK2/PKR in the absence of double-stranded RNA (dsRNA), leading to phosphorylation of EIF2S1/EFI2-alpha and inhibition of translation and induction of apoptosis. Required for siRNA production by DICER1 and for subsequent siRNA-mediated post-transcriptional gene silencing. Does not seem to be required for processing of pre-miRNA to miRNA by DICER1. Promotes UBC9-p53/TP53 association and sumoylation and phosphorylation of p53/TP53 at 'Lys-386' at 'Ser-392' respectively and enhances its activity in a EIF2AK2/PKR-dependent manner. This Bos taurus (Bovine) protein is Interferon-inducible double-stranded RNA-dependent protein kinase activator A (PRKRA).